The primary structure comprises 178 residues: Adenine phosphoribosyltransferase (178 aa).

It belongs to the purine/pyrimidine phosphoribosyltransferase family. Homodimer.

The protein resides in the cytoplasm. The enzyme catalyses AMP + diphosphate = 5-phospho-alpha-D-ribose 1-diphosphate + adenine. It functions in the pathway purine metabolism; AMP biosynthesis via salvage pathway; AMP from adenine: step 1/1. Catalyzes a salvage reaction resulting in the formation of AMP, that is energically less costly than de novo synthesis. In Mycoplasmoides gallisepticum (strain R(low / passage 15 / clone 2)) (Mycoplasma gallisepticum), this protein is Adenine phosphoribosyltransferase.